A 363-amino-acid chain; its full sequence is 3-isopropylmalate dehydrogenase (363 aa).

78-89 serves as a coordination point for NAD(+); that stretch reads GPKWGTGAVRPE. The substrate site is built by Arg-96, Arg-106, Arg-135, and Asp-224. Residues Asp-224, Asp-249, and Asp-253 each contribute to the Mg(2+) site. 288-299 serves as a coordination point for NAD(+); the sequence is GSAPDLPANKVN.

It belongs to the isocitrate and isopropylmalate dehydrogenases family. As to quaternary structure, homodimer. Mg(2+) is required as a cofactor. It depends on Mn(2+) as a cofactor.

The protein resides in the cytoplasm. The catalysed reaction is (2R,3S)-3-isopropylmalate + NAD(+) = 4-methyl-2-oxopentanoate + CO2 + NADH. It functions in the pathway amino-acid biosynthesis; L-leucine biosynthesis; L-leucine from 3-methyl-2-oxobutanoate: step 3/4. In terms of biological role, catalyzes the oxidation of 3-carboxy-2-hydroxy-4-methylpentanoate (3-isopropylmalate) to 3-carboxy-4-methyl-2-oxopentanoate. The product decarboxylates to 4-methyl-2 oxopentanoate. The protein is 3-isopropylmalate dehydrogenase (LEU2) of Cyberlindnera jadinii (Torula yeast).